Consider the following 241-residue polypeptide: Chaperone protein FimC (241 aa).

The first 36 residues, 1–36 (MSNKNVNVRKSQEITFCLLAGILMFMAMMVAGRAEA), serve as a signal peptide directing secretion.

Belongs to the periplasmic pilus chaperone family.

It is found in the periplasm. Its function is as follows. Required for the biogenesis of type 1 fimbriae. Binds and interact with FimH. This Escherichia coli (strain K12) protein is Chaperone protein FimC (fimC).